The primary structure comprises 629 residues: (-)-alpha pinene synthase 1, chloroplastic (629 aa).

A chloroplast-targeting transit peptide spans 1 to 48 (MSPVSVISLPSDLCLPTSFIDRSGRELNPLHITIPNVAMRRQGKLMTR). Positions 380, 384, and 532 each coordinate Mg(2+). The short motif at 380–384 (DDMYD) is the DDXXD motif element.

The protein belongs to the terpene synthase family. Tpsd subfamily. It depends on Mg(2+) as a cofactor. Mn(2+) serves as cofactor.

The protein localises to the plastid. It is found in the chloroplast. The enzyme catalyses (2E)-geranyl diphosphate = (1S,5S)-alpha-pinene + diphosphate. It catalyses the reaction (2E)-geranyl diphosphate = (1S,5S)-beta-pinene + diphosphate. It participates in terpene metabolism; oleoresin biosynthesis. The protein operates within secondary metabolite biosynthesis; terpenoid biosynthesis. Functionally, monoterpene synthase (TPS) involved in the biosynthesis of monoterpene natural products included in conifer oleoresin secretions and volatile emissions; these compounds contribute to biotic and abiotic stress defense against herbivores and pathogens. Catalyzes the conversion of (2E)-geranyl diphosphate (GPP) to (-)-alpha-pinene and, to a lower extent, to (-)-beta-pinene. The chain is (-)-alpha pinene synthase 1, chloroplastic from Pinus contorta (Shore pine).